A 540-amino-acid polypeptide reads, in one-letter code: Probable quinate permease (540 aa).

At 1–22 the chain is on the cytoplasmic side; the sequence is MSILALVEDRPTPKEVYNWRIY. Residues 23-43 form a helical membrane-spanning segment; that stretch reads LLAAVASFTSCMIGYDSAFIG. At 44–74 the chain is on the extracellular side; that stretch reads TTLALGSFREEFEFTTMEPAAVNRVSANIVS. A helical transmembrane segment spans residues 75–95; it reads CYQAGAFFGAFFAYPIGHFWG. Residues 96-97 are Cytoplasmic-facing; that stretch reads RK. Residues 98 to 118 form a helical membrane-spanning segment; sequence WGLLSAAAIFTLGAGLMLGAN. The Extracellular segment spans residues 119–130; sequence GDRGLGLIYGGR. A helical membrane pass occupies residues 131–151; the sequence is VLAGIGVGAGSNITPIYISEL. The Cytoplasmic segment spans residues 152-157; the sequence is APPSIR. A helical membrane pass occupies residues 158 to 178; the sequence is GHLVGVYELGWQIGGLVGFWI. At 179 to 193 the chain is on the extracellular side; it reads NYGVSETLAPSHKQW. The helical transmembrane segment at 194 to 214 threads the bilayer; that stretch reads IIPFAVQLIPSGLLLIGAVFL. Topologically, residues 215 to 285 are cytoplasmic; that stretch reads RESPRWLFSS…AGTNKKVMYR (71 aa). A helical membrane pass occupies residues 286 to 306; it reads LFLGSMLFFWQNGSGINAINY. The Extracellular portion of the chain corresponds to 307-325; sequence YSPTVFKSIGLRGTNTGMF. Residues 326–346 traverse the membrane as a helical segment; that stretch reads STGIFGVVKTVVTFIWLLYLI. The Cytoplasmic segment spans residues 347–352; that stretch reads DRMGRR. The helical transmembrane segment at 353–373 threads the bilayer; that stretch reads LLLLVGAAGASVCLWIVGAYI. Topologically, residues 374–387 are extracellular; that stretch reads KIANPAKNGNGEMT. The helical transmembrane segment at 388–408 threads the bilayer; sequence GGGIAAMFFFYLYTVFYTPSW. Residues 409–456 lie on the Cytoplasmic side of the membrane; that stretch reads NGTPWVMNSEMFEPNMRSLAQACAAASNWLWNFLISRFTPQMFDKMGY. A helical membrane pass occupies residues 457-477; sequence GVWFFFASLMLCSIVIVFFLI. Over 478 to 540 the chain is Extracellular; it reads PETKGIPLES…RLESVQPKEA (63 aa). The disordered stretch occupies residues 519 to 540; that stretch reads IEESGYTKSGEQRLESVQPKEA. A compositionally biased stretch (basic and acidic residues) spans 528–540; that stretch reads GEQRLESVQPKEA.

This sequence belongs to the major facilitator superfamily. Sugar transporter (TC 2.A.1.1) family. Interacts with creB. In terms of processing, ubiquitinated. Deubiquitinated by creB, probably to control its activity or amount.

The protein localises to the cell membrane. Integral membrane transporter that imports quinic acid to be catabolized as a carbon source. This is Probable quinate permease (qutD) from Aspergillus clavatus (strain ATCC 1007 / CBS 513.65 / DSM 816 / NCTC 3887 / NRRL 1 / QM 1276 / 107).